We begin with the raw amino-acid sequence, 159 residues long: MRIGHGFDVHAFGGEGPIIIGGVRIPYEKGLLAHSDGDVALHALTDALLGAAALGDIGKLFPDTDPAFKGADSRELLREAWRRIQAKGYILGNVDVTIIAQAPKMLPHIPQMRVFIAEDLGCHMDDVNVKATTTEKLGFTGRGEGITCEAVALLMKAAK.

Residues D8 and H10 each coordinate a divalent metal cation. Residues 8–10 and 34–35 each bind 4-CDP-2-C-methyl-D-erythritol 2-phosphate; these read DVH and HS. An a divalent metal cation-binding site is contributed by H42. 4-CDP-2-C-methyl-D-erythritol 2-phosphate contacts are provided by residues 56–58, 61–65, 100–106, 132–135, F139, and R142; these read DIG, FPDTD, AQAPKML, and TTTE.

The protein belongs to the IspF family. As to quaternary structure, homotrimer. A divalent metal cation is required as a cofactor.

The enzyme catalyses 4-CDP-2-C-methyl-D-erythritol 2-phosphate = 2-C-methyl-D-erythritol 2,4-cyclic diphosphate + CMP. It participates in isoprenoid biosynthesis; isopentenyl diphosphate biosynthesis via DXP pathway; isopentenyl diphosphate from 1-deoxy-D-xylulose 5-phosphate: step 4/6. Functionally, involved in the biosynthesis of isopentenyl diphosphate (IPP) and dimethylallyl diphosphate (DMAPP), two major building blocks of isoprenoid compounds. Catalyzes the conversion of 4-diphosphocytidyl-2-C-methyl-D-erythritol 2-phosphate (CDP-ME2P) to 2-C-methyl-D-erythritol 2,4-cyclodiphosphate (ME-CPP) with a corresponding release of cytidine 5-monophosphate (CMP). The protein is 2-C-methyl-D-erythritol 2,4-cyclodiphosphate synthase of Salmonella arizonae (strain ATCC BAA-731 / CDC346-86 / RSK2980).